We begin with the raw amino-acid sequence, 240 residues long: Putative exosome complex component RRP41 (240 aa).

Belongs to the RNase PH family. Component of the RNA exosome complex.

The protein resides in the cytoplasm. The protein localises to the nucleus. It localises to the nucleolus. It is found in the nucleoplasm. Non-catalytic component of the RNA exosome complex which has 3'-&gt;5' exoribonuclease activity and participates in a multitude of cellular RNA processing and degradation events. The protein is Putative exosome complex component RRP41 (exos-4.1) of Caenorhabditis briggsae.